Consider the following 63-residue polypeptide: Putative transmembrane protein ORF63 (63 aa).

At M1–L8 the chain is on the extracellular side. A helical membrane pass occupies residues E9–V29. The Cytoplasmic portion of the chain corresponds to N30 to P31. Residues S32–F52 form a helical membrane-spanning segment. The Extracellular segment spans residues H53–G63.

It localises to the host membrane. This chain is Putative transmembrane protein ORF63, found in Acidianus filamentous virus 1 (isolate United States/Yellowstone) (AFV-1).